The primary structure comprises 80 residues: Exodeoxyribonuclease 7 small subunit (80 aa).

Belongs to the XseB family. In terms of assembly, heterooligomer composed of large and small subunits.

It localises to the cytoplasm. It carries out the reaction Exonucleolytic cleavage in either 5'- to 3'- or 3'- to 5'-direction to yield nucleoside 5'-phosphates.. Its function is as follows. Bidirectionally degrades single-stranded DNA into large acid-insoluble oligonucleotides, which are then degraded further into small acid-soluble oligonucleotides. The sequence is that of Exodeoxyribonuclease 7 small subunit from Pseudoalteromonas translucida (strain TAC 125).